The following is a 447-amino-acid chain: MGKLFGTDGVRGLANKKLTAPLAMKLGAAAARVLVSKEEVGGRRPTAVVGRDPRVSGEMLTAALSAGMASQGVDVLDVGVIPTPAVAFLTDDFGADMGVMISASHNPMPDNGIKFFAAGGRKLQDDVEDEIEATMLELPETGPTGAAIGRILDESSDALERYLAHVGTAINHPLDGIRVVVDCANGAASTAAPEAYRQAGADVVAIHSRPNSFNINDGVGSTHIEVLQKAVLEHQADLGLAHDGDADRCLAVDSEGNVVDGDQIMAILAVAMKENGELKQNTLVATVMSNLGMKLAMRANGIKVLETQVGDRYVLAELLASDLSLGGEQSGHVIISEHATTGDGTLTGLTLMARMAQTGKPLSELASVMTVLPQTLINVPVADKSVIADDERVVEAIAKAEEDLGDAGRVLLRPSGTEELFRVMVEAADPGTARRIAGKLAAVVAEV.

S104 functions as the Phosphoserine intermediate in the catalytic mechanism. Mg(2+) is bound by residues S104, D243, D245, and D247. Residue S104 is modified to Phosphoserine.

It belongs to the phosphohexose mutase family. Mg(2+) is required as a cofactor. In terms of processing, activated by phosphorylation.

The enzyme catalyses alpha-D-glucosamine 1-phosphate = D-glucosamine 6-phosphate. Functionally, catalyzes the conversion of glucosamine-6-phosphate to glucosamine-1-phosphate. The chain is Phosphoglucosamine mutase from Corynebacterium jeikeium (strain K411).